The following is a 381-amino-acid chain: Queuine tRNA-ribosyltransferase (381 aa).

D96 functions as the Proton acceptor in the catalytic mechanism. Substrate contacts are provided by residues 96 to 100 (DSGGF), D150, Q193, and G220. Positions 251 to 257 (GVGSPDA) are RNA binding. Residue D270 is the Nucleophile of the active site. Positions 275-279 (TRIAR) are RNA binding; important for wobble base 34 recognition. Zn(2+) contacts are provided by C308, C310, C313, and H339.

The protein belongs to the queuine tRNA-ribosyltransferase family. Homodimer. Within each dimer, one monomer is responsible for RNA recognition and catalysis, while the other monomer binds to the replacement base PreQ1. Zn(2+) is required as a cofactor.

It carries out the reaction 7-aminomethyl-7-carbaguanine + guanosine(34) in tRNA = 7-aminomethyl-7-carbaguanosine(34) in tRNA + guanine. Its pathway is tRNA modification; tRNA-queuosine biosynthesis. Functionally, catalyzes the base-exchange of a guanine (G) residue with the queuine precursor 7-aminomethyl-7-deazaguanine (PreQ1) at position 34 (anticodon wobble position) in tRNAs with GU(N) anticodons (tRNA-Asp, -Asn, -His and -Tyr). Catalysis occurs through a double-displacement mechanism. The nucleophile active site attacks the C1' of nucleotide 34 to detach the guanine base from the RNA, forming a covalent enzyme-RNA intermediate. The proton acceptor active site deprotonates the incoming PreQ1, allowing a nucleophilic attack on the C1' of the ribose to form the product. After dissociation, two additional enzymatic reactions on the tRNA convert PreQ1 to queuine (Q), resulting in the hypermodified nucleoside queuosine (7-(((4,5-cis-dihydroxy-2-cyclopenten-1-yl)amino)methyl)-7-deazaguanosine). The sequence is that of Queuine tRNA-ribosyltransferase from Bacillus subtilis (strain 168).